The primary structure comprises 544 residues: Chaperonin GroEL (544 aa).

ATP-binding positions include 29 to 32, 86 to 90, G413, 477 to 479, and D493; these read TLGP, DGTTT, and DVL.

It belongs to the chaperonin (HSP60) family. As to quaternary structure, forms a cylinder of 14 subunits composed of two heptameric rings stacked back-to-back. Interacts with the co-chaperonin GroES.

The protein localises to the cytoplasm. The enzyme catalyses ATP + H2O + a folded polypeptide = ADP + phosphate + an unfolded polypeptide.. Together with its co-chaperonin GroES, plays an essential role in assisting protein folding. The GroEL-GroES system forms a nano-cage that allows encapsulation of the non-native substrate proteins and provides a physical environment optimized to promote and accelerate protein folding. The polypeptide is Chaperonin GroEL (Clostridium kluyveri (strain NBRC 12016)).